An 842-amino-acid polypeptide reads, in one-letter code: uncharacterized protein (842 aa).

Disordered stretches follow at residues 1–20 and 142–209; these read MLHFLFHSGSSSNRNSSPKE and NSSS…TSSS. In terms of domain architecture, uDENN FNIP1/2-type spans 35 to 422; it reads TKDVTFRLVL…TAKSFHKCIL (388 aa). Positions 183–209 are enriched in polar residues; sequence ANLSSSSKNMKDSTLSSQKARSNTSSS. In terms of domain architecture, cDENN FNIP1/2-type spans 430–772; that stretch reads APLIKPSVFS…CYEIHEFPSE (343 aa). Residues Ser-573 and Ser-590 each carry the phosphoserine modification. The region spanning 777-842 is the dDENN FNIP1/2-type domain; the sequence is YAPFLLKEHH…KEVLRVCSHC (66 aa).

Its subcellular location is the cytoplasm. This is an uncharacterized protein from Schizosaccharomyces pombe (strain 972 / ATCC 24843) (Fission yeast).